The chain runs to 445 residues: Glutamate--tRNA ligase 2 (445 aa).

The short motif at 10 to 20 (PSPTGMLHVGN) is the 'HIGH' region element. Positions 240–244 (KISKR) match the 'KMSKS' region motif. Lys243 provides a ligand contact to ATP.

This sequence belongs to the class-I aminoacyl-tRNA synthetase family. Glutamate--tRNA ligase type 1 subfamily. In terms of assembly, monomer.

It is found in the cytoplasm. The catalysed reaction is tRNA(Glu) + L-glutamate + ATP = L-glutamyl-tRNA(Glu) + AMP + diphosphate. Its function is as follows. Catalyzes the attachment of glutamate to tRNA(Glu) in a two-step reaction: glutamate is first activated by ATP to form Glu-AMP and then transferred to the acceptor end of tRNA(Glu). This is Glutamate--tRNA ligase 2 from Rickettsia canadensis (strain McKiel).